We begin with the raw amino-acid sequence, 460 residues long: Bifunctional beta-D-glucosidase/beta-D-fucosidase (460 aa).

E168 functions as the Proton donor in the catalytic mechanism. E362 (nucleophile) is an active-site residue.

The protein belongs to the glycosyl hydrolase 1 family. As to quaternary structure, monomer.

It localises to the secreted. The catalysed reaction is Hydrolysis of terminal, non-reducing beta-D-glucosyl residues with release of beta-D-glucose.. The enzyme catalyses Hydrolysis of terminal non-reducing beta-D-fucose residues in beta-D-fucosides.. Its activity is regulated as follows. Inhibited by Cu(2+), Ag(+) and Hg(+), but not by other cations such as Mg(2+), Ca(2+), Mn(2+) and Co(2+). Inhibited by 1-amino-1-deoxy-D-glucose and p-chloromercuribenzoic acid, but not by EDTA or dithiothreitol. Inhibited by the disaccharides sucrose, lactose and cellobiose. The monosaccharides D-fructose, D-mannose, D-xylose and D-glucose increase the beta-D-fucosidase activity, but not the beta-D-glucosidase activity. D-glucose inhibits the beta-D-glucosidase activity, but promotes the beta-D-fucosidase activity. D-fucose inhibits the beta-D-glucosidase activity and does not significantly affect the beta-D-fucosidase activity. In terms of biological role, bifunctional beta-D-glucosidase/beta-D-fucosidase. Activity towards pNP-beta-D-fucoside is about 80-85% of the activity towards pNP-beta-D-glucoside. Also has slight activity (less than 10%) towards pNP-beta-D-galactoside, and very low activity (less than 1%) towards pNP-beta-D-xyloside. Hydrolyzes laminaribiose, sophorose, cellobiose and gentobiose. Not active against maltose, pNP-alpha-D-glucoside or pNP-beta-L-fucoside. The protein is Bifunctional beta-D-glucosidase/beta-D-fucosidase of Bifidobacterium breve.